The sequence spans 76 residues: High-potential iron-sulfur protein isozyme 2 (76 aa).

Residues Cys-38, Cys-41, Cys-54, and Cys-70 each contribute to the [4Fe-4S] cluster site.

Belongs to the high-potential iron-sulfur protein (HiPIP) family. As to quaternary structure, homodimer.

Specific class of high-redox-potential 4Fe-4S ferredoxins. Functions in anaerobic electron transport in most purple and in some other photosynthetic bacteria and in at least one genus (Paracoccus) of halophilic, denitrifying bacteria. This Halorhodospira halophila (Ectothiorhodospira halophila) protein is High-potential iron-sulfur protein isozyme 2 (hip2).